A 273-amino-acid polypeptide reads, in one-letter code: 2,3,4,5-tetrahydropyridine-2,6-dicarboxylate N-succinyltransferase (273 aa).

Substrate contacts are provided by Arg104 and Asp141.

This sequence belongs to the transferase hexapeptide repeat family. In terms of assembly, homotrimer.

It is found in the cytoplasm. It catalyses the reaction (S)-2,3,4,5-tetrahydrodipicolinate + succinyl-CoA + H2O = (S)-2-succinylamino-6-oxoheptanedioate + CoA. Its pathway is amino-acid biosynthesis; L-lysine biosynthesis via DAP pathway; LL-2,6-diaminopimelate from (S)-tetrahydrodipicolinate (succinylase route): step 1/3. The chain is 2,3,4,5-tetrahydropyridine-2,6-dicarboxylate N-succinyltransferase from Thioalkalivibrio sulfidiphilus (strain HL-EbGR7).